The primary structure comprises 665 residues: DNA ligase (665 aa).

NAD(+) contacts are provided by residues 32-36, 81-82, and Glu-110; these read DSEYD and SL. The N6-AMP-lysine intermediate role is filled by Lys-112. Positions 133, 167, 283, and 307 each coordinate NAD(+). Residues Cys-401, Cys-404, Cys-419, and Cys-424 each contribute to the Zn(2+) site. Positions 586–665 constitute a BRCT domain; the sequence is EGHPDFSGKT…AAFIEKQNGI (80 aa).

It belongs to the NAD-dependent DNA ligase family. LigA subfamily. Requires Mg(2+) as cofactor. Mn(2+) serves as cofactor.

The catalysed reaction is NAD(+) + (deoxyribonucleotide)n-3'-hydroxyl + 5'-phospho-(deoxyribonucleotide)m = (deoxyribonucleotide)n+m + AMP + beta-nicotinamide D-nucleotide.. Functionally, DNA ligase that catalyzes the formation of phosphodiester linkages between 5'-phosphoryl and 3'-hydroxyl groups in double-stranded DNA using NAD as a coenzyme and as the energy source for the reaction. It is essential for DNA replication and repair of damaged DNA. The chain is DNA ligase from Staphylococcus epidermidis (strain ATCC 12228 / FDA PCI 1200).